Here is a 458-residue protein sequence, read N- to C-terminus: Probable alpha-L-glutamate ligase (458 aa).

Positions 1-162 (MSDNKFIIGS…YGVKTAKKSG (162 aa)) are unknown. Residues 163 to 458 (LKIGLLASNP…IEKKLGWKAD (296 aa)) form an alpha-L-glutamate ligase region. The 184-residue stretch at 267–450 (LQLLQKNNLD…IAGAMIESIE (184 aa)) folds into the ATP-grasp domain. ATP contacts are provided by residues lysine 304, 341–342 (EF), aspartate 350, and 374–376 (RAN). Positions 411, 423, and 425 each coordinate Mg(2+). Mn(2+) is bound by residues aspartate 411, glutamate 423, and asparagine 425.

The protein in the C-terminal section; belongs to the RimK family. The cofactor is Mg(2+). Mn(2+) is required as a cofactor.

This Shewanella pealeana (strain ATCC 700345 / ANG-SQ1) protein is Probable alpha-L-glutamate ligase.